The following is a 156-amino-acid chain: Ribonuclease pancreatic (156 aa).

The first 28 residues, 1-28 (MALEKSLALLPLLVLVLLVLGWVQPSLG), serve as a signal peptide directing secretion. Basic and acidic residues predominate over residues 33–43 (AKKFQRQHMDS). A disordered region spans residues 33–52 (AKKFQRQHMDSDGSPSSNPT). The substrate site is built by Lys35 and Arg38. Catalysis depends on His40, which acts as the Proton acceptor. 4 disulfide bridges follow: Cys54–Cys112, Cys68–Cys123, Cys86–Cys138, and Cys93–Cys100. N-linked (GlcNAc...) asparagine glycosylation is present at Asn62. Substrate is bound by residues 69–73 (KPVNT), Lys94, and Arg113. Asn116 carries an N-linked (GlcNAc...) asparagine glycan. The Proton donor role is filled by His147.

It belongs to the pancreatic ribonuclease family. Monomer. Interacts with and forms tight 1:1 complexes with RNH1. Dimerization of two such complexes may occur. Interaction with RNH1 inhibits this protein.

The protein localises to the secreted. The catalysed reaction is an [RNA] containing cytidine + H2O = an [RNA]-3'-cytidine-3'-phosphate + a 5'-hydroxy-ribonucleotide-3'-[RNA].. It carries out the reaction an [RNA] containing uridine + H2O = an [RNA]-3'-uridine-3'-phosphate + a 5'-hydroxy-ribonucleotide-3'-[RNA].. In terms of biological role, endonuclease that catalyzes the cleavage of RNA on the 3' side of pyrimidine nucleotides. Acts on single-stranded and double-stranded RNA. The sequence is that of Ribonuclease pancreatic (RNASE1) from Saimiri sciureus (Common squirrel monkey).